The primary structure comprises 983 residues: MAATATEDGGLSFTVASVMEDVLQQHGNGLRDHDLVSRRAEEAASRRYEAANWLRRMVGVVGAKDLPAEPTEEGLRLGLRSGIILCKVLNKVQPGAVSKVVESPCDAILVADGAPLSAFQYFENVRNFLVAIQEMGFPTFEASDLEQGGNASRVVNCVLAIKSYDEWKQSGGIGVWKFGGNIKPPALGKSSFVRKNSEPFMNSLSRTSSINNEKAPSENDSNKLSSPSSLSTLVRAVLSDKKPEDVPKLIESLLSKVVEEFENRVTNQYELVRAAPRESTSSQNNRSFLKPLGEREREEKSFKAIKKDDHNSQILDEKMKTRQFKQLTIFNQQQEDIEGLRQTLYTTRAGMQFMQKKFQEEFSSLGMHVHGLAHAASGYHRVLEENRKLYNQVQDLKGSIRVYCRVRPFLPGQSSFSSTIGNMEDDTIGINTASRHGKSLKSFTFNKVFGPSATQEEVFSDMQPLIRSVLDGYNVCIFAYGQTGSGKTFTMSGPRDLTEKSQGVNYRALGDLFLLAEQRKDTFRYDIAVQMIEIYNEQVRDLLVTDGSNKRLEIRNSSQKGLSVPDASLVPVSSTFDVIDLMKTGHKNRAVGSTALNDRSSRSHSCLTVHVQGRDLTSGAVLRGCMHLVDLAGSERVDKSEVTGDRLKEAQHINRSLSALGDVIASLAHKNPHVPYRNSKLTQLLQDSLGGQAKTLMFVHISPEADAVGETISTLKFAERVATVELGAARVNNDTSDVKELKEQIATLKAALARKEAESQQNNILKTPGGSEKHKAKTGEVEIHNNNIMTKKSESCEVEEITVNSPPWPPVASPGQAYREDDRSFGSSEWVDKVMVNNRQDEMRRVESLWGGATTENGIGILPEDFYRRDLASDTSRIFSEHSYNIFMGNNNSTDDLDAATSDSSEPDLLWQFNQSTKIPTRSNIESKLKKPVSKPIRSPQSRNNSNNTVSRPLASQKVGNGPRGMKQFGPADMKRKATNARH.

The Calponin-homology (CH) domain maps to 44 to 166 (ASRRYEAANW…CVLAIKSYDE (123 aa)). 2 stretches are compositionally biased toward polar residues: residues 203–214 (SLSRTSSINNEK) and 278–287 (ESTSSQNNRS). 2 disordered regions span residues 203 to 227 (SLSR…LSSP) and 276 to 295 (PRES…LGER). The region spanning 399 to 724 (SIRVYCRVRP…LKFAERVATV (326 aa)) is the Kinesin motor domain. 481 to 488 (GQTGSGKT) is a binding site for ATP. Residues 731–758 (VNNDTSDVKELKEQIATLKAALARKEAE) are a coiled coil. 2 disordered regions span residues 802 to 824 (TVNS…DDRS) and 921 to 983 (TRSN…NARH). Residues 939 to 951 (SPQSRNNSNNTVS) are compositionally biased toward polar residues.

The protein belongs to the TRAFAC class myosin-kinesin ATPase superfamily. Kinesin family. KIN-14 subfamily.

The polypeptide is Kinesin-like protein KIN-14I (Arabidopsis thaliana (Mouse-ear cress)).